The primary structure comprises 282 residues: HTH-type transcriptional activator RhaR (282 aa).

The 99-residue stretch at D179–L277 folds into the HTH araC/xylS-type domain. 2 DNA-binding regions (H-T-H motif) span residues D196–T217 and V244–T267.

As to quaternary structure, binds DNA as a dimer.

It is found in the cytoplasm. Activates expression of the rhaSR operon in response to L-rhamnose. This Salmonella typhi protein is HTH-type transcriptional activator RhaR.